Reading from the N-terminus, the 268-residue chain is UDP-2,3-diacylglucosamine hydrolase (268 aa).

5 residues coordinate Mn(2+): Asp-25, His-27, Asp-58, Asn-97, and His-132. Residue 97–98 (NR) participates in substrate binding. Positions 140, 178, 191, and 222 each coordinate substrate. Mn(2+) is bound by residues His-222 and His-224.

The protein belongs to the LpxH family. Requires Mn(2+) as cofactor.

The protein localises to the cell inner membrane. The enzyme catalyses UDP-2-N,3-O-bis[(3R)-3-hydroxytetradecanoyl]-alpha-D-glucosamine + H2O = 2-N,3-O-bis[(3R)-3-hydroxytetradecanoyl]-alpha-D-glucosaminyl 1-phosphate + UMP + 2 H(+). It participates in glycolipid biosynthesis; lipid IV(A) biosynthesis; lipid IV(A) from (3R)-3-hydroxytetradecanoyl-[acyl-carrier-protein] and UDP-N-acetyl-alpha-D-glucosamine: step 4/6. Hydrolyzes the pyrophosphate bond of UDP-2,3-diacylglucosamine to yield 2,3-diacylglucosamine 1-phosphate (lipid X) and UMP by catalyzing the attack of water at the alpha-P atom. Involved in the biosynthesis of lipid A, a phosphorylated glycolipid that anchors the lipopolysaccharide to the outer membrane of the cell. This is UDP-2,3-diacylglucosamine hydrolase from Ralstonia nicotianae (strain ATCC BAA-1114 / GMI1000) (Ralstonia solanacearum).